Here is a 308-residue protein sequence, read N- to C-terminus: ABC transporter protein AbcA (308 aa).

An ABC transporter domain is found at 6-245 (LAVSGVNKSF…YHKLLHMEGD (240 aa)). 58–65 (GHNGAGKS) contributes to the ATP binding site.

Belongs to the ABC transporter superfamily.

Influences the expression of the surface array protein gene (vapA). May have both regulatory and transport activities. This chain is ABC transporter protein AbcA (abcA), found in Aeromonas salmonicida.